Reading from the N-terminus, the 323-residue chain is Pathogenicity locus probable regulatory protein WtsA (323 aa).

The 211-residue stretch at 41–251 folds into the Sigma-54 factor interaction domain; the sequence is VAPLEIDLVL…ELKTAAKRFT (211 aa). ATP-binding positions include 52–59 and 123–132; these read GETGTGKD and EIDSMPLSLQ. The segment at residues 293 to 312 is a DNA-binding region (H-T-H motif); the sequence is IDEAAMELGMPLRTLYHRIK.

Functionally, positive activator of wtsB involved in plant pathogenicity. Probably interacts with sigma-54. This chain is Pathogenicity locus probable regulatory protein WtsA (wtsA), found in Pantoea stewartii subsp. stewartii (Erwinia stewartii).